Reading from the N-terminus, the 129-residue chain is Glycine cleavage system H protein (129 aa).

Residues 24-106 (IAVIGISAYA…YEQGWLLKVQ (83 aa)) form the Lipoyl-binding domain. The residue at position 65 (Lys-65) is an N6-lipoyllysine.

It belongs to the GcvH family. The glycine cleavage system is composed of four proteins: P, T, L and H. It depends on (R)-lipoate as a cofactor.

Functionally, the glycine cleavage system catalyzes the degradation of glycine. The H protein shuttles the methylamine group of glycine from the P protein to the T protein. The chain is Glycine cleavage system H protein from Synechococcus elongatus (strain ATCC 33912 / PCC 7942 / FACHB-805) (Anacystis nidulans R2).